A 70-amino-acid chain; its full sequence is Putative membrane protein insertion efficiency factor (70 aa).

The protein belongs to the UPF0161 family.

It is found in the cell inner membrane. Its function is as follows. Could be involved in insertion of integral membrane proteins into the membrane. The chain is Putative membrane protein insertion efficiency factor from Desulforapulum autotrophicum (strain ATCC 43914 / DSM 3382 / VKM B-1955 / HRM2) (Desulfobacterium autotrophicum).